The sequence spans 35 residues: MEALVYTFLLVGTLGIIFFAIFFREPPRIIAKTKK.

Residues 3-23 (ALVYTFLLVGTLGIIFFAIFF) form a helical membrane-spanning segment.

This sequence belongs to the PsbT family. In terms of assembly, PSII is composed of 1 copy each of membrane proteins PsbA, PsbB, PsbC, PsbD, PsbE, PsbF, PsbH, PsbI, PsbJ, PsbK, PsbL, PsbM, PsbT, PsbY, PsbZ, Psb30/Ycf12, at least 3 peripheral proteins of the oxygen-evolving complex and a large number of cofactors. It forms dimeric complexes.

Its subcellular location is the plastid. It localises to the chloroplast thylakoid membrane. Found at the monomer-monomer interface of the photosystem II (PS II) dimer, plays a role in assembly and dimerization of PSII. PSII is a light-driven water plastoquinone oxidoreductase, using light energy to abstract electrons from H(2)O, generating a proton gradient subsequently used for ATP formation. The protein is Photosystem II reaction center protein T of Chara vulgaris (Common stonewort).